The following is a 240-amino-acid chain: Pyridoxine 5'-phosphate synthase (240 aa).

N7 is a 3-amino-2-oxopropyl phosphate binding site. 9-10 (DH) is a 1-deoxy-D-xylulose 5-phosphate binding site. R18 serves as a coordination point for 3-amino-2-oxopropyl phosphate. Catalysis depends on H43, which acts as the Proton acceptor. 2 residues coordinate 1-deoxy-D-xylulose 5-phosphate: R45 and H50. E70 acts as the Proton acceptor in catalysis. T100 lines the 1-deoxy-D-xylulose 5-phosphate pocket. The Proton donor role is filled by H191. 3-amino-2-oxopropyl phosphate is bound by residues G192 and 213–214 (GH).

It belongs to the PNP synthase family. In terms of assembly, homooctamer; tetramer of dimers.

It localises to the cytoplasm. It carries out the reaction 3-amino-2-oxopropyl phosphate + 1-deoxy-D-xylulose 5-phosphate = pyridoxine 5'-phosphate + phosphate + 2 H2O + H(+). It functions in the pathway cofactor biosynthesis; pyridoxine 5'-phosphate biosynthesis; pyridoxine 5'-phosphate from D-erythrose 4-phosphate: step 5/5. Catalyzes the complicated ring closure reaction between the two acyclic compounds 1-deoxy-D-xylulose-5-phosphate (DXP) and 3-amino-2-oxopropyl phosphate (1-amino-acetone-3-phosphate or AAP) to form pyridoxine 5'-phosphate (PNP) and inorganic phosphate. The sequence is that of Pyridoxine 5'-phosphate synthase from Trichodesmium erythraeum (strain IMS101).